A 772-amino-acid polypeptide reads, in one-letter code: General transcription and DNA repair factor IIH helicase subunit XPD (772 aa).

The Helicase ATP-binding domain maps to 7 to 283; sequence DLPILFPYPR…QSDSKKLQDE (277 aa). Residue 42-49 participates in ATP binding; the sequence is MPSGTGKT. [4Fe-4S] cluster contacts are provided by Cys-115, Cys-133, Cys-154, and Cys-189. The short motif at 233-236 is the DEAH box element; it reads DEAH.

Belongs to the helicase family. RAD3/XPD subfamily. Component of the 7-subunit TFIIH core complex composed of XPB/ptr8, XPD/rad15, ssl1, tfb1, tfb2, tfb4 and tfb5, which is active in NER. The core complex associates with the 3-subunit CTD-kinase module TFIIK composed of mcs2/cyclin H, mcs6/cdk7 and pmh1/tfb3 to form the 10-subunit holoenzyme (holo-TFIIH) active in transcription. Requires [4Fe-4S] cluster as cofactor.

It is found in the nucleus. It catalyses the reaction Couples ATP hydrolysis with the unwinding of duplex DNA at the replication fork by translocating in the 5'-3' direction. This creates two antiparallel DNA single strands (ssDNA). The leading ssDNA polymer is the template for DNA polymerase III holoenzyme which synthesizes a continuous strand.. The catalysed reaction is ATP + H2O = ADP + phosphate + H(+). In terms of biological role, ATP-dependent 5'-3' DNA helicase, component of the general transcription and DNA repair factor IIH (TFIIH) core complex, which is involved in general and transcription-coupled nucleotide excision repair (NER) of damaged DNA and, when complexed to TFIIK, in RNA transcription by RNA polymerase II. In NER, TFIIH acts by opening DNA around the lesion to allow the excision of the damaged oligonucleotide and its replacement by a new DNA fragment. The ATP-dependent helicase activity of XPD/rad15 is required for DNA opening. In transcription, TFIIH has an essential role in transcription initiation. When the pre-initiation complex (PIC) has been established, TFIIH is required for promoter opening and promoter escape. Phosphorylation of the C-terminal tail (CTD) of the largest subunit of RNA polymerase II by the kinase module TFIIK controls the initiation of transcription. XPD/rad15 acts by forming a bridge between TFIIK and the core-TFIIH complex. Involved in the maintenance of the fidelity of DNA replication. This chain is General transcription and DNA repair factor IIH helicase subunit XPD, found in Schizosaccharomyces pombe (strain 972 / ATCC 24843) (Fission yeast).